Reading from the N-terminus, the 384-residue chain is Sialyltransferase-like protein 3 (384 aa).

Topologically, residues 1-5 (MKRRH) are cytoplasmic. A helical; Signal-anchor for type II membrane protein membrane pass occupies residues 6–26 (WSHPSCGLLLLVAVFCLLLVF). Residues 27–384 (RCSQLRHSGD…FRLPPVSFYR (358 aa)) are Lumenal-facing. The N-linked (GlcNAc...) asparagine glycan is linked to Asn-241.

It belongs to the glycosyltransferase 29 family.

It localises to the golgi apparatus membrane. In terms of biological role, possesses sialyltransferase-like activity in vitro. Transfers sialic acid to the glycoprotein asialofetuin. The transferred sialic acid is linked to galactose of Gal-beta-1,3-GalNAc through alpha-2,6-linkage. The sequence is that of Sialyltransferase-like protein 3 from Oryza sativa subsp. indica (Rice).